A 515-amino-acid chain; its full sequence is 4-hydroxybenzoate brominase (decarboxylating) (515 aa).

FAD contacts are provided by S13, E32, V40, F41, H51, V102, and Q364.

Belongs to the FMO family. It depends on FAD as a cofactor.

It carries out the reaction 2 bromide + 4-hydroxybenzoate + 2 NADPH + 2 O2 + 5 H(+) = 2,4-dibromophenol + CO2 + 2 NADP(+) + 4 H2O. The enzyme catalyses bromide + 4-hydroxybenzoate + NADPH + O2 + 2 H(+) = 3-bromo-4-hydroxybenzoate + NADP(+) + 2 H2O. The catalysed reaction is 3-bromo-4-hydroxybenzoate + bromide + NADPH + O2 + 3 H(+) = 2,4-dibromophenol + CO2 + NADP(+) + 2 H2O. It catalyses the reaction 3,4-dihydroxybenzoate + 2 bromide + 2 NADPH + 2 O2 + 5 H(+) = 3,5-dibromobenzene-1,2-diol + CO2 + 2 NADP(+) + 4 H2O. It carries out the reaction 3,4-dihydroxybenzoate + bromide + NADPH + O2 + 2 H(+) = 3-bromo-4,5-dihydroxybenzoate + NADP(+) + 2 H2O. The enzyme catalyses 3-bromo-4,5-dihydroxybenzoate + bromide + NADPH + O2 + 3 H(+) = 3,5-dibromobenzene-1,2-diol + CO2 + NADP(+) + 2 H2O. With respect to regulation, activity is abolished in the absence of either bromide or NADPH, while a partial reduction in activity is observed upon omission of FAD. Activity does not require the addition of a flavin reductase to regenerate FADH(2) in situ. Brominase involved in the biosynthesis of polybrominated aromatic organic compounds. Catalyzes the bromination of 4-hydroxybenzoate (4-HBA) to 3-bromo-4-hydroxybenzoate, followed by bromination and decarboxylation of 3-bromo-4-hydroxybenzoate to 2,4-dibromophenol. Can also use 3,4-dihydroxybenzoate, with lower efficiency, forming 3-bromo-4,5-dihydroxybenzoate and 3,5-dibromobenzene-1,2-diol. Can utilize iodide in vivo leading to the formation of iodophenols, but cannot use chloride. The chain is 4-hydroxybenzoate brominase (decarboxylating) from Pseudoalteromonas luteoviolacea (strain 2ta16).